A 476-amino-acid chain; its full sequence is Glucose-1-phosphate adenylyltransferase (476 aa).

Alpha-D-glucose 1-phosphate is bound by residues tyrosine 114, glycine 179, 194–195 (EK), and serine 212.

It belongs to the bacterial/plant glucose-1-phosphate adenylyltransferase family. Homotetramer.

The enzyme catalyses alpha-D-glucose 1-phosphate + ATP + H(+) = ADP-alpha-D-glucose + diphosphate. It functions in the pathway glycan biosynthesis; glycogen biosynthesis. Functionally, involved in the biosynthesis of ADP-glucose, a building block required for the elongation reactions to produce glycogen. Catalyzes the reaction between ATP and alpha-D-glucose 1-phosphate (G1P) to produce pyrophosphate and ADP-Glc. This is Glucose-1-phosphate adenylyltransferase from Yersinia pestis bv. Antiqua (strain Antiqua).